Consider the following 374-residue polypeptide: F(420)H(2) dehydrogenase subunit D (374 aa).

It belongs to the complex I 49 kDa subunit family. The FPO complex is composed of at least 13 different subunits.

Its subcellular location is the cell inner membrane. It carries out the reaction methanophenazine + reduced coenzyme F420-(gamma-L-Glu)(n) = dihydromethanophenazine + oxidized coenzyme F420-(gamma-L-Glu)(n) + H(+). Functionally, component of the F(420)H(2) dehydrogenase (FPO complex) which is part of the energy-conserving F(420)H(2):heterodisulfide oxidoreductase system. The membrane-bound electron transfer system of the complex plays an important role in the metabolism of methylotrophic methanogens when the organisms grow on methanol or methylamines. Catalyzes the oxidation of methanophenazine to dihydromethanophenazine. It shuttles electrons from F(420)H(2), via FAD and iron-sulfur (Fe-S) centers, to methanophenazine (an electron carrier in the membrane). It couples the redox reaction to proton translocation (for every two electrons transferred, two hydrogen ions are translocated across the cytoplasmic membrane), and thus conserves the redox energy in a proton gradient. It also catalyzes the oxidation of F(420)H(2) with quinones such as 2,3-dimethyl-1,4-naphthoquinone, 2-methyl-1,4-naphthoquinone and tetramethyl-p-benzoquinone. The protein is F(420)H(2) dehydrogenase subunit D (fpoD) of Methanosarcina mazei (strain ATCC BAA-159 / DSM 3647 / Goe1 / Go1 / JCM 11833 / OCM 88) (Methanosarcina frisia).